The following is a 192-amino-acid chain: Protein CREG1 (192 aa).

Residues 1 to 18 form the signal peptide; it reads MVLLAFLCAAALAALARG. Asn95, Asn133, and Asn166 each carry an N-linked (GlcNAc...) asparagine glycan.

This sequence belongs to the CREG family.

It is found in the secreted. May contribute to the transcriptional control of cell growth and differentiation. The protein is Protein CREG1 (CREG1) of Gallus gallus (Chicken).